Reading from the N-terminus, the 160-residue chain is General odorant-binding protein 2 (160 aa).

The first 19 residues, 1–19 (MGYKLLLMYIAIVIDSVIG), serve as a signal peptide directing secretion. Disulfide bonds link Cys38–Cys73, Cys69–Cys127, and Cys116–Cys136.

Belongs to the PBP/GOBP family. In terms of tissue distribution, antenna.

Present in the aqueous fluid surrounding olfactory sensory dendrites and are thought to aid in the capture and transport of hydrophobic odorants into and through this fluid. The protein is General odorant-binding protein 2 of Antheraea pernyi (Chinese oak silk moth).